Here is a 106-residue protein sequence, read N- to C-terminus: uncharacterized protein (106 aa).

This is an uncharacterized protein from Pyrococcus woesei.